We begin with the raw amino-acid sequence, 230 residues long: Large ribosomal subunit protein uL1 (230 aa).

This sequence belongs to the universal ribosomal protein uL1 family. As to quaternary structure, part of the 50S ribosomal subunit.

Binds directly to 23S rRNA. The L1 stalk is quite mobile in the ribosome, and is involved in E site tRNA release. Its function is as follows. Protein L1 is also a translational repressor protein, it controls the translation of the L11 operon by binding to its mRNA. In Paramagnetospirillum magneticum (strain ATCC 700264 / AMB-1) (Magnetospirillum magneticum), this protein is Large ribosomal subunit protein uL1.